Consider the following 529-residue polypeptide: Glycerol kinase 5 (529 aa).

Positions 22 and 23 each coordinate ATP. Residues arginine 92, aspartate 269, and glutamine 270 each contribute to the glycerol site. ATP is bound by residues threonine 291, glycine 334, and glycine 434.

The protein belongs to the FGGY kinase family.

Its subcellular location is the cytoplasm. It catalyses the reaction glycerol + ATP = sn-glycerol 3-phosphate + ADP + H(+). It functions in the pathway polyol metabolism; glycerol degradation via glycerol kinase pathway; sn-glycerol 3-phosphate from glycerol: step 1/1. In terms of biological role, skin-specific kinase that plays a key role in glycerol metabolism, catalyzing its phosphorylation to produce sn-glycerol 3-phosphate. Involved in skin-specific regulation of sterol regulatory element-binding protein (SREBP) processing and lipid biosynthesis. The polypeptide is Glycerol kinase 5 (gk5) (Danio rerio (Zebrafish)).